We begin with the raw amino-acid sequence, 734 residues long: Cleavage stimulation factor subunit 77 (734 aa).

HAT repeat units lie at residues 20 to 52, 54 to 85, 93 to 128, 139 to 172, 198 to 237, 246 to 278, 280 to 312, 314 to 345, 347 to 379, 382 to 414, 416 to 450, and 474 to 505; these read SPIAQATPIYEQLLSLYPTSARFWKQYVEAQMA, NNDDATKQIFSRCLLTCLQVPLWQCYIRFIRK, EGQEETTKAFEFMLNYIGTDIASGPIWTEYIAFLKS, HRKTALRKVYHRAILTPTHHVEQLWKDYENFENT, ERKKYIEEIDWNMLAVPPTGTSKEETQWVAWKKFLSFEKG, SSTKRIIYAYEQCLMCLYHYPDVWYDYAEWHVK, GSTDAAIKVFQRALKAIPDSEMLKYAFAEMEES, GAIQSAKKLYENILGASTNSLAHIQYLRFLRR, EGVEAARKYFLDARKSPSCTYHVYIAFATMAFC, KEPKVAHNIFEEGLKLYMSEPVYILKYADFLTR, NDDRNIRALFERALSTLPVEDSAEVWKRFIQFEQT, and EGSSPPESSLQDVVSRYSYMDLWPCTSNDLDH. The interval 637 to 734 is disordered; the sequence is VKQSFAAKGN…FSGELSGSTG (98 aa). A compositionally biased stretch (basic and acidic residues) spans 664-677; that stretch reads LPRDRRATKRKDSD. Residues 709–734 show a composition bias toward polar residues; the sequence is ATSSQTPTGSTSYGSAFSGELSGSTG.

Homodimer. Belongs to the CSTF complex. Forms a complex with cleavage and polyadenylation specificity factor (CPSF) subunits CPSF30, CSTF64, PCFS1, PCFS5 and FIPS5.

It is found in the nucleus. Its function is as follows. One of the multiple factors required for polyadenylation and 3'-end cleavage of pre-mRNAs. Required for the targeted 3' processing of antisense transcripts that triggers transcriptional silencing of the corresponding sense gene. This is Cleavage stimulation factor subunit 77 from Arabidopsis thaliana (Mouse-ear cress).